A 23-amino-acid polypeptide reads, in one-letter code: NADP-dependent malic enzyme (23 aa).

Belongs to the malic enzymes family. As to quaternary structure, homotetramer.

The enzyme catalyses (S)-malate + NADP(+) = pyruvate + CO2 + NADPH. It catalyses the reaction oxaloacetate + H(+) = pyruvate + CO2. This Populus euphratica (Euphrates poplar) protein is NADP-dependent malic enzyme.